We begin with the raw amino-acid sequence, 604 residues long: 3-hydroxy-3-methylglutaryl-coenzyme A reductase (604 aa).

The interval 1 to 31 is disordered; it reads MDVRRRSEKPAYPTKEFAAGEKPLKPHKQQQ. 2 helical membrane passes run 40 to 62 and 90 to 110; these read ASDALPLPLYLTNGLFFTMFFSV and AIASLIASVIYLLGFFGIGFV. Residues 111–189 are linker; sequence QSFVSRDNND…PLVTPAASEE (79 aa). The interval 190-604 is catalytic; that stretch reads DEEIIKSVVQ…STKDVTKASS (415 aa). Glutamate 283 acts as the Charge relay system in catalysis. An N-linked (GlcNAc...) asparagine glycan is attached at asparagine 347. Catalysis depends on lysine 415, which acts as the Charge relay system. The N-linked (GlcNAc...) asparagine glycan is linked to asparagine 460. Aspartate 491 (charge relay system) is an active-site residue. The active-site Proton donor is histidine 589. A glycan (N-linked (GlcNAc...) asparagine) is linked at asparagine 593.

It belongs to the HMG-CoA reductase family. As to expression, found in protoplasts and leaves submitted to stress. Low levels found in apexes, anthers and roots.

It is found in the endoplasmic reticulum membrane. The enzyme catalyses (R)-mevalonate + 2 NADP(+) + CoA = (3S)-3-hydroxy-3-methylglutaryl-CoA + 2 NADPH + 2 H(+). Its pathway is metabolic intermediate biosynthesis; (R)-mevalonate biosynthesis; (R)-mevalonate from acetyl-CoA: step 3/3. Its function is as follows. Catalyzes the synthesis of mevalonate, the specific precursor of all isoprenoid compounds present in plants. Possible role in plant defense mechanisms as well as in the cell cycle. The chain is 3-hydroxy-3-methylglutaryl-coenzyme A reductase (HMGR) from Nicotiana sylvestris (Wood tobacco).